The primary structure comprises 346 residues: Probable alpha-1,2-galactosyltransferase gmh2 (346 aa).

At 1-11 (MALMLSRIPRR) the chain is on the cytoplasmic side. Residues 12–32 (FFFLFLTVGLIAGAFLYSLIY) form a helical; Signal-anchor for type II membrane protein membrane-spanning segment. The Lumenal segment spans residues 33–346 (FVDVDLVSKV…LWQKFYALID (314 aa)). Residues asparagine 64, asparagine 142, and asparagine 224 are each glycosylated (N-linked (GlcNAc...) asparagine).

Belongs to the glycosyltransferase 34 family.

The protein localises to the golgi apparatus membrane. In Schizosaccharomyces pombe (strain 972 / ATCC 24843) (Fission yeast), this protein is Probable alpha-1,2-galactosyltransferase gmh2 (gmh2).